Consider the following 525-residue polypeptide: COP9 signalosome complex subunit 1b (525 aa).

In terms of domain architecture, PCI spans 298-460; it reads HFLNANFDHC…KILFAKEADQ (163 aa).

It belongs to the CSN1 family. Component of the CSN complex, probably composed of CSN1b, alien/CSN2, CSN3, CSN4, CSN5, CSN6, CSN7 and CSN8.

It is found in the cytoplasm. The protein resides in the nucleus. Functionally, essential component of the COP9 signalosome complex (CSN), a complex involved in various cellular and developmental processes. The CSN complex is an essential regulator of the ubiquitin (Ubl) conjugation pathway by mediating the deneddylation of the cullin subunits of the SCF-type E3 ligase complexes, leading to decrease the Ubl ligase activity of SCF. The CSN complex plays an essential role in oogenesis and embryogenesis and is required for proper photoreceptor R cell differentiation and promote lamina glial cell migration or axon targeting. It also promotes Ubl-dependent degradation of cyclin E (CycE) during early oogenesis. This chain is COP9 signalosome complex subunit 1b (CSN1b), found in Drosophila melanogaster (Fruit fly).